Here is a 288-residue protein sequence, read N- to C-terminus: Polyamine aminopropyltransferase (288 aa).

The 235-residue stretch at 11–245 (IEWYPRGYGV…SPWSFLVGVK (235 aa)) folds into the PABS domain. Q36 is an S-methyl-5'-thioadenosine binding site. The spermidine site is built by H67 and D91. S-methyl-5'-thioadenosine contacts are provided by residues E111 and 148-149 (DG). Residue D166 is the Proton acceptor of the active site. Residue 166–169 (DSTD) coordinates spermidine. P173 is an S-methyl-5'-thioadenosine binding site.

This sequence belongs to the spermidine/spermine synthase family. Homodimer or homotetramer.

It is found in the cytoplasm. The catalysed reaction is S-adenosyl 3-(methylsulfanyl)propylamine + agmatine = N(1)-(3-aminopropyl)agmatine + S-methyl-5'-thioadenosine + H(+). The enzyme catalyses S-adenosyl 3-(methylsulfanyl)propylamine + putrescine = S-methyl-5'-thioadenosine + spermidine + H(+). It catalyses the reaction cadaverine + S-adenosyl 3-(methylsulfanyl)propylamine = aminopropylcadaverine + S-methyl-5'-thioadenosine + H(+). The protein operates within amine and polyamine biosynthesis; spermidine biosynthesis; spermidine from putrescine: step 1/1. Functionally, involved in the biosynthesis of polyamines which are thought to support the growth of thermophilic microorganisms under high-temperature conditions. It seems that long-chain and branched-chain of polyamines effectively stabilize DNA and RNA, respectively. Catalyzes the irreversible transfer of a propylamine group from the amino donor S-adenosylmethioninamine (decarboxy-AdoMet) to agmatine to yield N1-aminopropylagmatine. It can also use cadaverine (1,5-diaminopentane) and putrescine (1,4-diaminobutane) as substrate with a lower activity than that of agmatine. The reaction involves a nucleophilic attack on the C-3 methylene of the propylamine moiety adjacent to the positively charged sulfur of decarboxy-AdoMet. The polypeptide is Polyamine aminopropyltransferase (Thermococcus kodakarensis (strain ATCC BAA-918 / JCM 12380 / KOD1) (Pyrococcus kodakaraensis (strain KOD1))).